Consider the following 90-residue polypeptide: Probable Fe(2+)-trafficking protein (90 aa).

Belongs to the Fe(2+)-trafficking protein family.

In terms of biological role, could be a mediator in iron transactions between iron acquisition and iron-requiring processes, such as synthesis and/or repair of Fe-S clusters in biosynthetic enzymes. The polypeptide is Probable Fe(2+)-trafficking protein (Cupriavidus pinatubonensis (strain JMP 134 / LMG 1197) (Cupriavidus necator (strain JMP 134))).